Consider the following 968-residue polypeptide: MGVPALFRWLSRKYPKIISPVVEEEDHEIGGAKYENPNPNGEIDNLYLDMNGIVHPCSHPEHKKPPETEDEMFLDIFKYTDRVLMMARPRKVLMIAVDGVAPRAKMNQQRARRFRAAKDAELKAKQLEIEVQERELRGEIINDAIKGKKQWDSNAITPGTPFMDRLAEALRYWVAYKLSSDPGWANLQVIISDATVPGEGEHKLMSFIRSQRSDPQYDPNTKHCIYGLDADLIFLGLATHEPHFRVLREDVFASQDKKFTIKDQIADANSNGDTVAKEDKKPFLWLHVNVLREYLQVELFTPRMSFPFELERAIDDWVFLCFFAGNDFLPHLPSLDVRDNGIDTLVQCWKRSLPILKDYVTCDGKLNLKSVEVLMSNLAYKESEIFKNKHAAEQRREENNKRRKLAQEQERALKRVYSSQVSKGKDKAPLTADVNMPLMDTSGQNVEGYANLTNSDIVQNRAILTKANLANSDAAAELKKLIDSKKTQVTVVQDQIATDSSANSETTTSESELEEIQSDNSLKRKLEPEEDKQTQSDDIKLWEPGYNKRYYEAKFHCQSDEEIEQTKRDVVRHYVEGIAWVALYYYQGCPSWNWYFPYHYAPFAADFTNLEELFPEGVKFKLGEPFRPFEQLMSVLPAASGHTLPQVFRDLMSNPDSEIIDFYPEEFEIDMNGKKMSWQGIPLLPFIDEKRLLDAVQKKYELLTPDEKSRNTNKEAELFISPANKNFSKFSEKLYKENENEVTFKYAKSGLSGKIFKLGTFNPEGVFNFPLNEGYMPNVNNSDYFQAIYHFPKTKTGKSMILNGHIAPLPALTTADKNDLLYQLDKFNNRRNGGRFNSTLDNSDYINKGPAGKELYKTYSMRRGGYRSYLQYLTNGHHPDHQSQNSQYLSYGQQKPYGGQGSYNQQGYYNQQGRYNQQGNNYNQQGRYSQQSQYNQYRSNTQRFNNNQNYNQSSNNSRSGYLPPRPQR.

Coiled-coil stretches lie at residues 113 to 140 (RFRAAKDAELKAKQLEIEVQERELRGEI) and 387 to 416 (KNKHAAEQRREENNKRRKLAQEQERALKRV). A compositionally biased stretch (low complexity) spans 498-510 (TDSSANSETTTSE). 2 disordered regions span residues 498–538 (TDSS…QSDD) and 873–968 (LTNG…RPQR). A compositionally biased stretch (basic and acidic residues) spans 521-538 (SLKRKLEPEEDKQTQSDD). The span at 882–893 (QSQNSQYLSYGQ) shows a compositional bias: polar residues. Residues 902 to 959 (SYNQQGYYNQQGRYNQQGNNYNQQGRYSQQSQYNQYRSNTQRFNNNQNYNQSSNNSRS) show a composition bias toward low complexity.

Belongs to the 5'-3' exonuclease family. XRN2/RAT1 subfamily. In terms of assembly, interacts with RAI1; the interaction is direct, stabilizes RAT1 protein structure and may stimulate its exoribonuclease activity. The interaction also stimulates RAI1 pyrophosphohydrolase activity, probably by recruiting it to mRNA substrates.

It localises to the nucleus. In terms of biological role, possesses 5'-&gt;3' exoribonuclease activity. Required for the processing of nuclear mRNA and rRNA precursors. May promote the termination of transcription by RNA polymerase II. Essential for vegetative cell growth and chromosome segregation. This is 5'-3' exoribonuclease 2 (RAT1) from Candida albicans (strain SC5314 / ATCC MYA-2876) (Yeast).